The following is a 64-amino-acid chain: Defensin beta 4A (64 aa).

An N-terminal signal peptide occupies residues 1–23 (MRVLYLLFSFLFIFLMPLPGVFG). Disulfide bonds link C31/C60, C38/C53, and C43/C61. The tract at residues 33 to 48 (KSGAICHPVFCPRRYK) is phosphatidylinositol 4,5-bisphosphate (PIP2) binding.

Belongs to the beta-defensin family. LAP/TAP subfamily. In terms of assembly, monomer. Homodimer. In terms of tissue distribution, expressed in lung epithelial cells (at protein level). Expressed in foreskin, lung and trachea. Lower expression in kidney, uterus and salivary gland tissue. Expressed in epithelial cells of the respiratory tract, with higher expression in distal parenchyma of the lung, trachea, and tonsils, and lower expression in pharynx and adenoid, and low expression in tongue and larynx.

The protein localises to the secreted. Exhibits antimicrobial activity against Gram-negative bacteria and Gram-positive bacteria, with highest activity against Gram-negative bacteria. Antimicrobial activity against P.aruginosa seems to be salt-sensitive and is reduced with high salt concentrations greater than 25 mM. Also exhibits antimicrobial activity against the yeast C.albicans. Permeabilizes C.albicans cell membranes via targeting plasma membrane lipid phosphatidylinositol 4,5-bisphosphate (PIP2), thereby leading to cell fragmentation and cell death. Acts as a ligand for C-C chemokine receptor CCR6. Binds to CCR6 and induces chemotactic activity of CCR6-expressing cells, such as immature dendritic cells and memory T cells. The polypeptide is Defensin beta 4A (DEFB4A) (Homo sapiens (Human)).